The chain runs to 388 residues: L-lactate dehydrogenase (388 aa).

The FMN hydroxy acid dehydrogenase domain occupies 1–380 (MIISAASDYR…SADALSRVTR (380 aa)). Substrate is bound at residue Tyr24. Ser106 and Gln127 together coordinate FMN. Tyr129 is a binding site for substrate. Thr155 contributes to the FMN binding site. Arg164 contacts substrate. Residue Lys251 coordinates FMN. The active-site Proton acceptor is His275. Arg278 contributes to the substrate binding site. 306–330 (DSGIRSGLDVVRMLALGADAVLLGR) contacts FMN.

The protein belongs to the FMN-dependent alpha-hydroxy acid dehydrogenase family. It depends on FMN as a cofactor.

It localises to the cell inner membrane. The catalysed reaction is (S)-lactate + A = pyruvate + AH2. Its function is as follows. Catalyzes the conversion of L-lactate to pyruvate. Is coupled to the respiratory chain. In Xanthomonas axonopodis pv. citri (strain 306), this protein is L-lactate dehydrogenase.